The following is a 512-amino-acid chain: Maturase K (512 aa).

The protein belongs to the intron maturase 2 family. MatK subfamily.

The protein localises to the plastid. It localises to the chloroplast. In terms of biological role, usually encoded in the trnK tRNA gene intron. Probably assists in splicing its own and other chloroplast group II introns. This chain is Maturase K, found in Amorphophallus titanum (Titan arum).